The primary structure comprises 538 residues: CTP synthase (538 aa).

The amidoligase domain stretch occupies residues 1–269; it reads MSPRKYVIVT…ARLVERRLFG (269 aa). CTP is bound at residue serine 15. Serine 15 provides a ligand contact to UTP. 16-21 is a binding site for ATP; the sequence is SVGKGL. Tyrosine 56 lines the L-glutamine pocket. An ATP-binding site is contributed by aspartate 73. Residues aspartate 73 and glutamate 143 each coordinate Mg(2+). Residues 150–152, 190–195, and lysine 226 contribute to the CTP site; these read DIE and KTKPVQ. Residues 190-195 and lysine 226 contribute to the UTP site; that span reads KTKPVQ. The Glutamine amidotransferase type-1 domain maps to 294–538; that stretch reads KVAMVGKYTK…FVTAVARLRG (245 aa). Residue glycine 358 coordinates L-glutamine. Cysteine 385 acts as the Nucleophile; for glutamine hydrolysis in catalysis. L-glutamine is bound by residues 386–389, glutamate 409, and arginine 466; that span reads FGMQ. Active-site residues include histidine 512 and glutamate 514.

It belongs to the CTP synthase family. Homotetramer.

It catalyses the reaction UTP + L-glutamine + ATP + H2O = CTP + L-glutamate + ADP + phosphate + 2 H(+). It carries out the reaction L-glutamine + H2O = L-glutamate + NH4(+). The catalysed reaction is UTP + NH4(+) + ATP = CTP + ADP + phosphate + 2 H(+). Its pathway is pyrimidine metabolism; CTP biosynthesis via de novo pathway; CTP from UDP: step 2/2. Its activity is regulated as follows. Allosterically activated by GTP, when glutamine is the substrate; GTP has no effect on the reaction when ammonia is the substrate. The allosteric effector GTP functions by stabilizing the protein conformation that binds the tetrahedral intermediate(s) formed during glutamine hydrolysis. Inhibited by the product CTP, via allosteric rather than competitive inhibition. Its function is as follows. Catalyzes the ATP-dependent amination of UTP to CTP with either L-glutamine or ammonia as the source of nitrogen. Regulates intracellular CTP levels through interactions with the four ribonucleotide triphosphates. This chain is CTP synthase, found in Aeropyrum pernix (strain ATCC 700893 / DSM 11879 / JCM 9820 / NBRC 100138 / K1).